The primary structure comprises 173 residues: Photosystem I assembly protein Ycf3 (173 aa).

TPR repeat units follow at residues 35–68, 72–105, and 120–153; these read AYLY…EDNQ, GETL…NPKQ, and GRMA…YPGG.

Belongs to the Ycf3 family.

It is found in the cellular thylakoid membrane. Essential for the assembly of the photosystem I (PSI) complex. May act as a chaperone-like factor to guide the assembly of the PSI subunits. This Prochlorococcus marinus (strain NATL2A) protein is Photosystem I assembly protein Ycf3.